The following is a 393-amino-acid chain: SH3 domain-binding protein 5-like (393 aa).

2 disordered regions span residues 1–59 (MAEL…LDPR) and 272–332 (HARR…DTDT). Threonine 13 is modified (phosphothreonine). The segment covering 18–28 (LRPEVVEDEVP) has biased composition (basic and acidic residues). Phosphoserine is present on residues serine 30 and serine 49. Coiled coils occupy residues 59-140 (RIQE…YERA) and 169-272 (WQEM…EQIH). A compositionally biased stretch (gly residues) spans 304-313 (GDSGIEGAEG). A compositionally biased stretch (low complexity) spans 317 to 332 (EEGSSLGPGPAPDTDT). 5 positions are modified to phosphoserine: serine 343, serine 350, serine 358, serine 362, and serine 378. The tract at residues 364-393 (DGQELGTRSGGRRGSDGGVRGGRHQRSVSL) is disordered. The span at 384 to 393 (GGRHQRSVSL) shows a compositional bias: basic residues.

Belongs to the SH3BP5 family.

Its function is as follows. Functions as a guanine nucleotide exchange factor (GEF) for RAB11A. This Pongo abelii (Sumatran orangutan) protein is SH3 domain-binding protein 5-like (SH3BP5L).